Here is a 158-residue protein sequence, read N- to C-terminus: Flagellar assembly factor FliW (158 aa).

This sequence belongs to the FliW family. In terms of assembly, interacts with translational regulator CsrA and flagellin(s).

Its subcellular location is the cytoplasm. In terms of biological role, acts as an anti-CsrA protein, binds CsrA and prevents it from repressing translation of its target genes, one of which is flagellin. Binds to flagellin and participates in the assembly of the flagellum. The protein is Flagellar assembly factor FliW of Moorella thermoacetica (strain ATCC 39073 / JCM 9320).